The chain runs to 119 residues: Acidic phospholipase A2 CM-II (119 aa).

7 disulfide bridges follow: Cys-11–Cys-71, Cys-26–Cys-118, Cys-28–Cys-44, Cys-43–Cys-99, Cys-50–Cys-92, Cys-60–Cys-85, and Cys-78–Cys-90. Ca(2+) is bound by residues Phe-27, Gly-29, and Gly-31. His-47 is a catalytic residue. Position 48 (Asp-48) interacts with Ca(2+). Asp-93 is an active-site residue.

This sequence belongs to the phospholipase A2 family. Group I subfamily. D49 sub-subfamily. Ca(2+) is required as a cofactor. Expressed by the venom gland.

It is found in the secreted. It catalyses the reaction a 1,2-diacyl-sn-glycero-3-phosphocholine + H2O = a 1-acyl-sn-glycero-3-phosphocholine + a fatty acid + H(+). Its function is as follows. PLA2 catalyzes the calcium-dependent hydrolysis of the 2-acyl groups in 3-sn-phosphoglycerides. The protein is Acidic phospholipase A2 CM-II of Aspidelaps scutatus (Shield-nose snake).